We begin with the raw amino-acid sequence, 76 residues long: MARFFRRRKFCRFTAEGVKEIDYKDLNTLKAYVSETGKIVPSRITGTKAKYQRQLATAIKRARYLALLPYTDSHGR.

This sequence belongs to the bacterial ribosomal protein bS18 family. Part of the 30S ribosomal subunit. Forms a tight heterodimer with protein bS6.

Its function is as follows. Binds as a heterodimer with protein bS6 to the central domain of the 16S rRNA, where it helps stabilize the platform of the 30S subunit. The chain is Small ribosomal subunit protein bS18 from Pseudomonas aeruginosa (strain LESB58).